A 207-amino-acid chain; its full sequence is Uridine kinase (207 aa).

Residue 11–18 coordinates ATP; the sequence is GGSGSGKT.

Belongs to the uridine kinase family.

The protein resides in the cytoplasm. The enzyme catalyses uridine + ATP = UMP + ADP + H(+). It carries out the reaction cytidine + ATP = CMP + ADP + H(+). The protein operates within pyrimidine metabolism; CTP biosynthesis via salvage pathway; CTP from cytidine: step 1/3. Its pathway is pyrimidine metabolism; UMP biosynthesis via salvage pathway; UMP from uridine: step 1/1. The protein is Uridine kinase of Staphylococcus haemolyticus (strain JCSC1435).